The following is a 294-amino-acid chain: MAHGIPSQGKVTITVDEYSSNPTQAFTHYNINQSRFQPPHVHMVDPIPYDTPKPAGHTRFVCISDTHSRTDGIQMPYGDILLHTGDFTELGLPSEVKKFNDWLGNLPYEYKIVIAGNHELTFDKEFMADLVKQDYYRFPSVSKLKPEDFDNVQSLLTNSIYLQDSEVTVKGFRIYGAPWTPWFNGWGFNLPRGQSLLDKWNLIPEGIDILMTHGPPLGFRDWVPKELQRVGCVELLNTVQRRVRPKLHVFGGIHEGYGIMTDGYTTYINASTCTVSFQPTNPPIIFDLPNPQGS.

Mn(2+) is bound by residues Asp-65, His-67, Asp-86, Asn-117, and His-213. Residue 117–118 coordinates GMP; sequence NH. GMP is bound by residues 225–226 and 252–255; these read KE and GIHE. His-254 contacts Mn(2+).

Belongs to the UPF0046 family. Homodimer. Mn(2+) serves as cofactor. The cofactor is Co(2+). In terms of tissue distribution, expressed predominantly in fetal brain.

With respect to regulation, inhibited by nmolar levels of AMP and GMP. Functionally, displays low metallophosphoesterase activity (in vitro). May play a role in the development of the nervous system. In Homo sapiens (Human), this protein is Metallophosphoesterase MPPED2 (MPPED2).